We begin with the raw amino-acid sequence, 151 residues long: UPF0756 membrane protein lhv_0995 (151 aa).

The next 5 membrane-spanning stretches (helical) occupy residues 4–24 (WLFL…SLII), 25–45 (ATGV…LPVI), 52–72 (WGVT…QIGF), 78–98 (TFKS…AILS), and 115–135 (LVLG…GPVI).

It belongs to the UPF0756 family.

It localises to the cell membrane. The sequence is that of UPF0756 membrane protein lhv_0995 from Lactobacillus helveticus (strain DPC 4571).